A 246-amino-acid chain; its full sequence is 1-(5-phosphoribosyl)-5-[(5-phosphoribosylamino)methylideneamino] imidazole-4-carboxamide isomerase (246 aa).

Residue Asp-8 is the Proton acceptor of the active site. The Proton donor role is filled by Asp-130.

Belongs to the HisA/HisF family.

The protein localises to the cytoplasm. It carries out the reaction 1-(5-phospho-beta-D-ribosyl)-5-[(5-phospho-beta-D-ribosylamino)methylideneamino]imidazole-4-carboxamide = 5-[(5-phospho-1-deoxy-D-ribulos-1-ylimino)methylamino]-1-(5-phospho-beta-D-ribosyl)imidazole-4-carboxamide. Its pathway is amino-acid biosynthesis; L-histidine biosynthesis; L-histidine from 5-phospho-alpha-D-ribose 1-diphosphate: step 4/9. This chain is 1-(5-phosphoribosyl)-5-[(5-phosphoribosylamino)methylideneamino] imidazole-4-carboxamide isomerase, found in Alcanivorax borkumensis (strain ATCC 700651 / DSM 11573 / NCIMB 13689 / SK2).